The following is a 171-amino-acid chain: Ly6/PLAUR domain-containing protein 6 (171 aa).

The signal sequence occupies residues 1–25; that stretch reads MEPSPALAWLLLLSLVADCLKAAQS. The UPAR/Ly6 domain occupies 47–141; the sequence is FKCFTCEKAA…PRNETDATFA (95 aa). 6 disulfides stabilise this stretch: Cys49-Cys77, Cys52-Cys61, Cys70-Cys96, Cys102-Cys121, Cys107-Cys118, and Cys122-Cys127. The NxI motif motif lies at 88–90; it reads NSI. Asn134 and Asn147 each carry an N-linked (GlcNAc...) asparagine glycan. Residue Asn147 is the site of GPI-anchor amidated asparagine attachment. Positions 148 to 171 are cleaved as a propeptide — removed in mature form; sequence QTNGHPHCVSVIVSCLWVWLGLTL.

As to quaternary structure, interacts with nicotinic acetylcholine receptors (nAChRs) including CHRNA3, CHRNA4, CHRNA5, CHRNA6, CHRNA7, CHRNB2 and CHRNB4. Interacts (via NxI motif) with LRP6. Detected in the frontal cortex and hippocampus (at protein level). Highly expressed in the brain and spinal cord, as well as dorsal root and trigeminal ganglia.

It is found in the secreted. The protein localises to the cytoplasm. Its subcellular location is the cell membrane. The protein resides in the synapse. It localises to the synaptosome. It is found in the membrane raft. The protein localises to the cell projection. Its subcellular location is the dendrite. The protein resides in the perikaryon. Acts as a modulator of nicotinic acetylcholine receptors (nAChRs) function in the brain. Inhibits nicotine-induced Ca(2+) influx through nAChRs. In vitro, specifically inhibits alpha-3:beta-4 and alpha-7 nAChR currents in an allosteric manner. Acts as a positive regulator of Wnt/beta-catenin signaling. This chain is Ly6/PLAUR domain-containing protein 6 (Lypd6), found in Mus musculus (Mouse).